The chain runs to 417 residues: Hydrogen cyanide synthase subunit HcnC (417 aa).

Residues M1 to S18 form the signal peptide. I7 to Y21 is a binding site for FAD. C19 carries the N-palmitoyl cysteine lipid modification. C19 carries S-diacylglycerol cysteine lipidation. The helical transmembrane segment at S46–F66 threads the bilayer.

It belongs to the FAD-dependent glycerol-3-phosphate dehydrogenase family. As to quaternary structure, heterotrimer of HcnA, HcnB and HcnC. Requires FAD as cofactor.

It localises to the cell membrane. It catalyses the reaction glycine + 2 A = hydrogen cyanide + 2 AH2 + CO2. With respect to regulation, oxygen is necessary for cyanogenesis. Activated by succinate, glycine methyl ester, glucose and D,L-methionine in addition to glycine. Phenazine methosulfate, methylene blue, 2,6-dichlorophenolindophenol (DCIP) and ferricyanide can replace oxygen for the reaction. Inhibited by pyrrolnitrin and acriflavine at 1 mM concentration. Functionally, a three-component membrane-bound flavoenzyme that catalyzes the formation of hydrogen cyanide, a secondary metabolite, by transfer of electrons to a cyanide-resistant branch of the aerobic respiratory chain. This chain is Hydrogen cyanide synthase subunit HcnC, found in Pseudomonas aeruginosa (strain ATCC 15692 / DSM 22644 / CIP 104116 / JCM 14847 / LMG 12228 / 1C / PRS 101 / PAO1).